A 103-amino-acid polypeptide reads, in one-letter code: Large ribosomal subunit protein bL21 (103 aa).

Belongs to the bacterial ribosomal protein bL21 family. Part of the 50S ribosomal subunit. Contacts protein L20.

This protein binds to 23S rRNA in the presence of protein L20. This Shewanella sp. (strain MR-7) protein is Large ribosomal subunit protein bL21.